We begin with the raw amino-acid sequence, 130 residues long: Small ribosomal subunit protein uS9 (130 aa).

It belongs to the universal ribosomal protein uS9 family.

In Bordetella avium (strain 197N), this protein is Small ribosomal subunit protein uS9.